We begin with the raw amino-acid sequence, 732 residues long: Alpha-galactosidase Mel36A (732 aa).

Residues 370-371 (DD), Trp415, Arg447, 480-484 (KWDMN), 530-533 (CSGG), and Asp552 each bind substrate. The active-site Nucleophile is the Asp482. The active-site Proton donor is the Asp552.

The protein belongs to the glycosyl hydrolase 36 family. As to quaternary structure, homotetramer.

The catalysed reaction is Hydrolysis of terminal, non-reducing alpha-D-galactose residues in alpha-D-galactosides, including galactose oligosaccharides, galactomannans and galactolipids.. In terms of biological role, hydrolyzes the short-chain alpha-galactosaccharide raffinose. The protein is Alpha-galactosidase Mel36A of Lactobacillus acidophilus (strain ATCC 700396 / NCK56 / N2 / NCFM).